The chain runs to 409 residues: O-methyltransferase pyiA (409 aa).

The segment covering methionine 1–proline 21 has biased composition (polar residues). The segment at methionine 1 to glutamate 46 is disordered. An S-adenosyl-L-methionine-binding site is contributed by aspartate 271. Residue histidine 317 is the Proton acceptor of the active site.

It belongs to the class I-like SAM-binding methyltransferase superfamily. Cation-independent O-methyltransferase family.

Its pathway is mycotoxin biosynthesis. Its function is as follows. O-methyltransferase; part of the gene cluster that mediates the biosynthesis of the mycotoxin pyrichalasin H, a tyrosine-derived cytochalasan that inhibits the growth of rice seedlings, but also inhibits lymphocyte capping and actin polymerization and alters cell morphology. Pyrichalasin H is indicated as the responsible agent for the genus-specific pathogenicity of M.grisea toward crabgrass. The first step in the pathway is catalyzed by the O-methyltransferase pyiA which methylates free tyrosine to generate the precursor O-methyltyrosine. The hybrid PKS-NRPS pyiS, assisted by the enoyl reductase pyiC, are responsible for fusion of the O-methyltyrosine precursor and the polyketide backbone. The polyketide synthase module (PKS) of pyiS is responsible for the synthesis of the polyketide backbone and the downstream nonribosomal peptide synthetase (NRPS) amidates the carboxyl end of the polyketide with the O-methyltyrosine precursor. As the NRPS A-domain demonstrates substrate tolerance, pyiS can also use phenylalanine, tyrosine and even para-chlorophenylalanine as amino acid precursor, which leads to the production of novel cytochalasans, including halogenated cytochalasans. Because pyiS lacks a designated enoylreductase (ER) domain, the required activity is provided the enoyl reductase pyiC. Reduction by the hydrolyase pyiE leads to 1,5-dihydropyrrolone, which is substrate for dehydration and intra-molecular Diels-Alder cyclization by the Diels-Alderase pyiF to yield the required isoindolone-fused macrocycle. The tailoring cytochrome P450 monooxygenases piyD and piyG catalyze the hydroxylation at C-18 and C-7, respectivily, whereas the short-chain dehydrogenase/reductase pyiH reduces the carbonyl at C-21 in preparation for the transfer of an acetyl group by the acetyltransferase pyiB. These 3 reactions whose order is not clear yet, lead to the production of O-methylpyrichalasin J, a deacetylated pyrichalasin H. Finally, pyiB to converts O-methylpyrichalasin J into the final product pyrichalasin H via acetylation of C-21. The sequence is that of O-methyltransferase pyiA from Pyricularia grisea (Crabgrass-specific blast fungus).